A 447-amino-acid polypeptide reads, in one-letter code: Probable glycine dehydrogenase (decarboxylating) subunit 1 (447 aa).

The protein belongs to the GcvP family. N-terminal subunit subfamily. The glycine cleavage system is composed of four proteins: P, T, L and H. In this organism, the P 'protein' is a heterodimer of two subunits.

It carries out the reaction N(6)-[(R)-lipoyl]-L-lysyl-[glycine-cleavage complex H protein] + glycine + H(+) = N(6)-[(R)-S(8)-aminomethyldihydrolipoyl]-L-lysyl-[glycine-cleavage complex H protein] + CO2. Functionally, the glycine cleavage system catalyzes the degradation of glycine. The P protein binds the alpha-amino group of glycine through its pyridoxal phosphate cofactor; CO(2) is released and the remaining methylamine moiety is then transferred to the lipoamide cofactor of the H protein. The protein is Probable glycine dehydrogenase (decarboxylating) subunit 1 of Bacillus cereus (strain ATCC 10987 / NRS 248).